The sequence spans 152 residues: Large ribosomal subunit protein bL9 (152 aa).

Belongs to the bacterial ribosomal protein bL9 family.

In terms of biological role, binds to the 23S rRNA. The chain is Large ribosomal subunit protein bL9 from Coxiella burnetii (strain Dugway 5J108-111).